Here is an 862-residue protein sequence, read N- to C-terminus: Linoleate 9S-lipoxygenase 1 (862 aa).

Positions 34-161 (NDFGATIIDG…NYRYSRVFFA (128 aa)) constitute a PLAT domain. One can recognise a Lipoxygenase domain in the interval 164–862 (TYLPSQMPAA…AKGIPNSISI (699 aa)). The segment at 212–241 (GRPILGGNSDHPYPRRGRTERKPNASDPSL) is disordered. Fe cation contacts are provided by His-517, His-522, His-708, Asn-712, and Ile-862.

The protein belongs to the lipoxygenase family. In terms of assembly, monomer. Fe cation is required as a cofactor.

It carries out the reaction (9Z,12Z)-octadecadienoate + O2 = (9S)-hydroperoxy-(10E,12Z)-octadecadienoate. Its pathway is lipid metabolism; oxylipin biosynthesis. In terms of biological role, plant lipoxygenase may be involved in a number of diverse aspects of plant physiology including growth and development, pest resistance, and senescence or responses to wounding. It catalyzes the hydroperoxidation of lipids containing a cis,cis-1,4-pentadiene structure. This is Linoleate 9S-lipoxygenase 1 (LOX1.1) from Hordeum vulgare (Barley).